The following is a 35-amino-acid chain: Probable protein L3 (35 aa).

This chain is Probable protein L3, found in Odocoileus virginianus papillomavirus 1 (DPV).